A 619-amino-acid polypeptide reads, in one-letter code: TOX high mobility group box family member 4 (619 aa).

2 disordered regions span residues 155–227 (LSLG…QKPV) and 306–335 (DPVP…TESP). At Thr176 the chain carries Phosphothreonine. 2 positions are modified to phosphoserine: Ser178 and Ser182. Basic and acidic residues predominate over residues 183 to 193 (LHEDGVDDFRR). Residues 208–218 (KQKAPKKRKKK) are compositionally biased toward basic residues. The Nuclear localization signal motif lies at 213–218 (KKRKKK). Positions 223-291 (PQKPVSAYAL…EYLKALAAYK (69 aa)) form a DNA-binding region, HMG box. At Thr313 the chain carries Phosphothreonine. Ser315 is subject to Phosphoserine. The span at 320–335 (TAADPASPAPASTESP) shows a compositional bias: low complexity. Residue Arg479 is modified to Asymmetric dimethylarginine. Phosphoserine is present on residues Ser531, Ser548, Ser550, Ser558, Ser560, and Ser565.

In terms of assembly, component of the PNUTS-PP1 phosphatase complex, composed of PPP1R10/PNUTS, TOX4, WDR82 and PPP1CA or PPP1CB or PPP1CC. Interacts with PPP1R10/PNUTS. Interacts with FOXO1 and CREB1 (increased by cAMP); FOXO1 and CREB1 are required for full induction of TOX4-dependent activity and the interactions are inhibited by insulin.

It is found in the nucleus. It localises to the chromosome. In liver, recruited to target gene promoters following treatment with dexamethasone and cAMP. Binding is decreased in presence of insulin. Its function is as follows. Transcription factor that modulates cell fate reprogramming from the somatic state to the pluripotent and neuronal fate. In liver, controls the expression of hormone-regulated gluconeogenic genes such as G6PC1 and PCK1. This regulation is independent of the insulin receptor activation. Also acts as a regulatory component of protein phosphatase 1 (PP1) complexes. Component of the PNUTS-PP1 protein phosphatase complex, a PP1 complex that regulates RNA polymerase II transcription pause-release. PNUTS-PP1 also plays a role in the control of chromatin structure and cell cycle progression during the transition from mitosis into interphase. The sequence is that of TOX high mobility group box family member 4 from Mus musculus (Mouse).